A 327-amino-acid polypeptide reads, in one-letter code: Protoheme IX farnesyltransferase (327 aa).

A run of 7 helical transmembrane segments spans residues 55-75, 101-121, 124-144, 152-172, 180-200, 237-257, and 278-298; these read LVCTLGGGALAAAAAGVLNCL, AAFVGAVSCTLAAAALLVSGV, LAAGLSLLGLCSYVLLYTALL, IVVGGVAGAIPPLVGAAAATG, WLFALVMVWTPAHFWALALLL, FLGIWALPEGGALYGLLILPF, and AKGLFRWSILYLFGVCLLLVM.

Belongs to the UbiA prenyltransferase family. Protoheme IX farnesyltransferase subfamily.

It is found in the cell inner membrane. The catalysed reaction is heme b + (2E,6E)-farnesyl diphosphate + H2O = Fe(II)-heme o + diphosphate. It functions in the pathway porphyrin-containing compound metabolism; heme O biosynthesis; heme O from protoheme: step 1/1. In terms of biological role, converts heme B (protoheme IX) to heme O by substitution of the vinyl group on carbon 2 of heme B porphyrin ring with a hydroxyethyl farnesyl side group. This chain is Protoheme IX farnesyltransferase, found in Synechococcus sp. (strain CC9311).